Consider the following 148-residue polypeptide: Cuticle protein CP1499 (148 aa).

In terms of tissue distribution, calcified shell.

This Cancer pagurus (Rock crab) protein is Cuticle protein CP1499.